A 417-amino-acid chain; its full sequence is Serine hydroxymethyltransferase (417 aa).

Position 54 is an N6-acetyllysine (Lys-54). (6S)-5,6,7,8-tetrahydrofolate-binding positions include Leu-121 and 125–127 (GHL). Lys-229 carries the post-translational modification N6-(pyridoxal phosphate)lysine. N6-acetyllysine occurs at positions 250, 285, and 354. 355–357 (SPF) serves as a coordination point for (6S)-5,6,7,8-tetrahydrofolate. N6-acetyllysine is present on Lys-375.

The protein belongs to the SHMT family. Homodimer. Pyridoxal 5'-phosphate is required as a cofactor.

It is found in the cytoplasm. The enzyme catalyses (6R)-5,10-methylene-5,6,7,8-tetrahydrofolate + glycine + H2O = (6S)-5,6,7,8-tetrahydrofolate + L-serine. The protein operates within one-carbon metabolism; tetrahydrofolate interconversion. It functions in the pathway amino-acid biosynthesis; glycine biosynthesis; glycine from L-serine: step 1/1. Functionally, catalyzes the reversible interconversion of serine and glycine with tetrahydrofolate (THF) serving as the one-carbon carrier. This reaction serves as the major source of one-carbon groups required for the biosynthesis of purines, thymidylate, methionine, and other important biomolecules. Also exhibits THF-independent aldolase activity toward beta-hydroxyamino acids, producing glycine and aldehydes, via a retro-aldol mechanism. The sequence is that of Serine hydroxymethyltransferase from Shigella sonnei (strain Ss046).